The primary structure comprises 372 residues: MNNEGSAVINEDDDTSLLVVILDCNVYSWGNREKSLQDAISGMNDDNDSSSRYNGSTTIGNNNNNNNNNNSNNNNNVNKRLINTSKNNYIGFNKFLEHFMVFINAYLMLNQENQLAIICSKIGESSFVFPQSNIDQYQQEQQELEQRQLNENGELLPTPNKTIQGQILAKLQKLDLEIKHDQTDILSSSFSASMSIALCYINRIKRETPTIKPRILVFNISPDVSSQYISVMNCIFSSQKQSIPVDSCILSQSDSTFLQQASHLTSGIYLKPQKQELLSQYLLTTFLLDTLSRKSLAYPTLKSVDYRASCFCHKRIVDIGYVCSVCLSIFCGHSSSCSTCGTKFSLKIDLRKQLNNNPTTTTSATSTVNNKS.

A disordered region spans residues 40–78 (ISGMNDDNDSSSRYNGSTTIGNNNNNNNNNNSNNNNNVN). The segment covering 50 to 60 (SSRYNGSTTIG) has biased composition (polar residues). Residues 61–78 (NNNNNNNNNNSNNNNNVN) are compositionally biased toward low complexity. Residues 323-340 (CSVCLSIFCGHSSSCSTC) form a C4-type zinc finger.

Belongs to the TFB4 family. As to quaternary structure, component of the 7-subunit TFIIH core complex composed of XPB/repB, XPD/repD, gtf2h1, gtf2h2, gtf2h3, gtf2h4 and gtf2h5, which is active in NER. The core complex associates with the 3-subunit CDK-activating kinase (CAK) module composed of cycH/cyclin H, cdk7 and mnat1 to form the 10-subunit holoenzyme (holo-TFIIH) active in transcription.

It is found in the nucleus. In terms of biological role, component of the general transcription and DNA repair factor IIH (TFIIH) core complex, which is involved in general and transcription-coupled nucleotide excision repair (NER) of damaged DNA and, when complexed to CAK, in RNA transcription by RNA polymerase II. In NER, TFIIH acts by opening DNA around the lesion to allow the excision of the damaged oligonucleotide and its replacement by a new DNA fragment. In transcription, TFIIH has an essential role in transcription initiation. When the pre-initiation complex (PIC) has been established, TFIIH is required for promoter opening and promoter escape. Phosphorylation of the C-terminal tail (CTD) of the largest subunit of RNA polymerase II by the kinase module CAK controls the initiation of transcription. The protein is General transcription factor IIH subunit 3 (gtf2h3) of Dictyostelium discoideum (Social amoeba).